A 166-amino-acid chain; its full sequence is Crossover junction endodeoxyribonuclease RuvC (166 aa).

Active-site residues include aspartate 7, glutamate 70, and histidine 143. Aspartate 7, glutamate 70, and histidine 143 together coordinate Mg(2+).

It belongs to the RuvC family. In terms of assembly, homodimer which binds Holliday junction (HJ) DNA. The HJ becomes 2-fold symmetrical on binding to RuvC with unstacked arms; it has a different conformation from HJ DNA in complex with RuvA. In the full resolvosome a probable DNA-RuvA(4)-RuvB(12)-RuvC(2) complex forms which resolves the HJ. It depends on Mg(2+) as a cofactor.

The protein localises to the cytoplasm. The catalysed reaction is Endonucleolytic cleavage at a junction such as a reciprocal single-stranded crossover between two homologous DNA duplexes (Holliday junction).. Its function is as follows. The RuvA-RuvB-RuvC complex processes Holliday junction (HJ) DNA during genetic recombination and DNA repair. Endonuclease that resolves HJ intermediates. Cleaves cruciform DNA by making single-stranded nicks across the HJ at symmetrical positions within the homologous arms, yielding a 5'-phosphate and a 3'-hydroxyl group; requires a central core of homology in the junction. The consensus cleavage sequence is 5'-(A/T)TT(C/G)-3'. Cleavage occurs on the 3'-side of the TT dinucleotide at the point of strand exchange. HJ branch migration catalyzed by RuvA-RuvB allows RuvC to scan DNA until it finds its consensus sequence, where it cleaves and resolves the cruciform DNA. The chain is Crossover junction endodeoxyribonuclease RuvC from Thermus thermophilus (strain ATCC BAA-163 / DSM 7039 / HB27).